A 359-amino-acid polypeptide reads, in one-letter code: 4-galactosyl-N-acetylglucosaminide 3-alpha-L-fucosyltransferase 9 (359 aa).

Residues 1–11 (MTSTSKGILRP) are Cytoplasmic-facing. The helical; Signal-anchor for type II membrane protein transmembrane segment at 12–32 (FLIVCIILGCFMACLLIYIKP) threads the bilayer. Residues 33 to 359 (TNSWIFSPME…VGNLEKWFWN (327 aa)) lie on the Lumenal side of the membrane. The N-linked (GlcNAc...) asparagine glycan is linked to N62. Positions 63 to 168 (ETTILVWVWP…RRDSDIQVPY (106 aa)) are acceptor-binding. A beta-D-galactosyl-(1-&gt;4)-N-acetyl-beta-D-glucosaminyl derivative is bound at residue Q75. Disulfide bonds link C82-C335, C91-C338, and C190-C238. N-linked (GlcNAc...) asparagine glycosylation occurs at N101. Position 137 (E137) interacts with a beta-D-galactosyl-(1-&gt;4)-N-acetyl-beta-D-glucosaminyl derivative. The active-site Nucleophile is E137. E137 contributes to the GDP-beta-L-fucose binding site. N153 carries N-linked (GlcNAc...) asparagine glycosylation. GDP-beta-L-fucose contacts are provided by Y168, V192, S194, N195, R202, V226, Y241, N246, Y252, E255, and K256. The interval 169–326 (GFLTVSTNPF…NWRKDFTVNL (158 aa)) is donor-binding. The acceptor-binding stretch occupies residues 327-359 (PRFWESHACLACDHVKRHQEYKSVGNLEKWFWN).

This sequence belongs to the glycosyltransferase 10 family. As to quaternary structure, homodimer. In terms of processing, N-glycosylated with complex-type N-glycans. The glycan alpha-D-Man-(1-&gt;3)-beta-D-Man-(1-&gt;4)-GlcNAc-(1-&gt;4)-GlcNAc is attached at Asn-153. In terms of tissue distribution, strongly expressed in forebrain and stomach, lower expression in spleen and peripheral blood leukocytes, and no expression in small intestine, colon, liver, lung, kidney, adrenal cortex or uterus. Highly expressed in granulocytes. Not expressed in monocytes.

The protein resides in the golgi apparatus. Its subcellular location is the trans-Golgi network membrane. It localises to the golgi apparatus membrane. The catalysed reaction is a beta-D-galactosyl-(1-&gt;4)-N-acetyl-beta-D-glucosaminyl derivative + GDP-beta-L-fucose = a beta-D-galactosyl-(1-&gt;4)-[alpha-L-fucosyl-(1-&gt;3)]-N-acetyl-beta-D-glucosaminyl derivative + GDP + H(+). It catalyses the reaction an alpha-Neu5Ac-(2-&gt;3)-beta-D-Gal-(1-&gt;4)-beta-D-GlcNAc-(1-&gt;3)-beta-D-Gal-(1-&gt;4)-beta-D-GlcNAc derivative + GDP-beta-L-fucose = an alpha-Neu5Ac-(2-&gt;3)-beta-D-Gal-(1-&gt;4)-beta-D-GlcNAc-(1-&gt;3)-beta-D-Gal-(1-&gt;4)-[alpha-L-Fuc-(1-&gt;3)]-beta-D-GlcNAc derivative + GDP + H(+). It carries out the reaction alpha-N-glycoloylneuraminosyl-(2-&gt;3)-beta-D-galactosyl-(1-&gt;4)-N-acetyl-beta-D-glucosaminyl-(1-&gt;3)-beta-D-galactosyl-(1-&gt;4)-N-acetyl-beta-D-glucosaminyl-(1-&gt;3)-beta-D-galactosyl-(1-&gt;4)-beta-D-glucosyl-(1&lt;-&gt;1')-ceramide + GDP-beta-L-fucose = alpha-N-glycoloylneuraminosyl-(2-&gt;3)-beta-D-galactosyl-(1-&gt;4)-N-acetyl-beta-D-glucosaminyl-(1-&gt;3)-beta-D-galactosyl-(1-&gt;4)-[alpha-L-fucosyl-(1-&gt;3)]-N-acetyl-beta-D-glucosaminyl-(1-&gt;3)-beta-D-galactosyl-(1-&gt;4)-beta-D-glucosyl-(1&lt;-&gt;1')-ceramide + GDP + H(+). The enzyme catalyses alpha-D-galactosyl-(1-&gt;3)-beta-D-galactosyl-(1-&gt;4)-N-acetyl-beta-D-glucosaminyl-(1-&gt;3)-beta-D-galactosyl-(1-&gt;4)-beta-D-glucosyl-(1&lt;-&gt;1')-ceramide + GDP-beta-L-fucose = a neolactoside IV(3)-alpha-Gal,III(3)-alpha-Fuc-nLc4Cer + GDP + H(+). The catalysed reaction is a neolactoside nLc4Cer + GDP-beta-L-fucose = a neolactoside III(3)-alpha-Fuc-nLc4Cer + GDP + H(+). It catalyses the reaction an N-acetyl-alpha-neuraminyl-(2-&gt;3)-beta-D-galactosyl-(1-&gt;4)-N-acetyl-beta-D-glucosaminyl derivative + GDP-beta-L-fucose = an alpha-Neu5Ac-(2-&gt;3)-beta-D-Gal-(1-&gt;4)-[alpha-L-Fuc-(1-&gt;3)]-beta-D-GlcNAc derivative + GDP + H(+). It carries out the reaction beta-D-Gal-(1-&gt;4)-beta-D-GlcNAc-(1-&gt;3)-beta-D-Gal-(1-&gt;4)-D-Glc + GDP-beta-L-fucose = beta-D-Gal-(1-&gt;4)-[alpha-L-Fuc-(1-&gt;3)]-beta-D-GlcNAc-(1-&gt;3)-beta-D-Gal-(1-&gt;4)-D-Glc + GDP + H(+). The enzyme catalyses an alpha-L-Fuc-(1-&gt;2)-beta-D-Gal-(1-&gt;4)-beta-D-GlcNAc derivative + GDP-beta-L-fucose = an alpha-L-Fuc-(1-&gt;2)-beta-D-Gal-(1-&gt;4)-[alpha-L-Fuc-(1-&gt;3)]-beta-D-GlcNAc derivative + GDP + H(+). The protein operates within protein modification; protein glycosylation. It participates in glycolipid biosynthesis. With respect to regulation, activated by Mn2+. In terms of biological role, catalyzes alpha(1-&gt;3) linkage of fucosyl moiety transferred from GDP-beta-L-fucose to N-acetyl glucosamine (GlcNAc) within type 2 lactosamine (LacNAc, beta-D-Gal-(1-&gt;4)-beta-D-GlcNAc-) glycan attached to glycolipids and N- or O-linked glycoproteins. Fucosylates distal type 2 LacNAc and its fucosylated (H-type 2 LacNAc) and sialylated (sialyl-type 2 LacNAc) derivatives to form Lewis x (Lex) (CD15) and Lewis y (Ley) antigenic epitopes involved in cell adhesion and differentiation. Generates Lex epitopes in the brain, presumably playing a role in the maintenance of neuronal stemness and neurite outgrowth in progenitor neural cells. Fucosylates the internal type 2 LacNAc unit of the polylactosamine chain to form VIM-2 antigen that serves as recognition epitope for SELE. Can also modify milk oligosaccharides, in particular type 2 tetrasaccharide LNnT. The chain is 4-galactosyl-N-acetylglucosaminide 3-alpha-L-fucosyltransferase 9 from Homo sapiens (Human).